Reading from the N-terminus, the 1795-residue chain is Putative surface cell antigen sca2 (1795 aa).

A signal peptide spans 1–33 (MNLQNSHSKKYVLTFFMSTCLLTSSFLSTSARA). The span at 360-373 (FLNNNDTTKPSTGR) shows a compositional bias: polar residues. 3 disordered regions span residues 360–391 (FLNN…SNQS), 664–709 (LEQT…SSNS), and 1354–1441 (KQEN…DEEL). The segment covering 672-700 (PNPPPLPLNGGIPNPPPLPLNGSMPPPPL) has biased composition (pro residues). Composition is skewed to basic and acidic residues over residues 1364–1383 (SSTK…EQSD) and 1398–1409 (SKNDKSSDDKKS). Residues 1417–1432 (DEDDTGYATDEEELEE) show a composition bias toward acidic residues. One can recognise an Autotransporter domain in the interval 1516–1795 (ETSINRGVWI…QGLIKLKVNL (280 aa)).

It localises to the cell outer membrane. This is Putative surface cell antigen sca2 (sca2) from Rickettsia conorii (strain ATCC VR-613 / Malish 7).